A 359-amino-acid polypeptide reads, in one-letter code: Protein RecA (359 aa).

64-71 is an ATP binding site; it reads GHESSGKT. The interval 328 to 359 is disordered; that stretch reads NKYPNKDSNDSPKEGSKIKTKVNPAVTQDELI. A compositionally biased stretch (basic and acidic residues) spans 331–344; that stretch reads PNKDSNDSPKEGSK.

Belongs to the RecA family.

The protein localises to the cytoplasm. In terms of biological role, can catalyze the hydrolysis of ATP in the presence of single-stranded DNA, the ATP-dependent uptake of single-stranded DNA by duplex DNA, and the ATP-dependent hybridization of homologous single-stranded DNAs. It interacts with LexA causing its activation and leading to its autocatalytic cleavage. In Francisella tularensis subsp. novicida (strain U112), this protein is Protein RecA.